The sequence spans 128 residues: MAGNLLSGAGRRLWDWVPLACRSFSLGVPRLIGIRLTLPPPKVVDRWNEKRAMFGVYDNIGILGNFEKHPKELIRGPIWLRGWKGNELQRCIRKRKMVGSRMFADDLHNLNKRIRYLYKHFNRHGKFR.

The N-terminal 31 residues, 1–31 (MAGNLLSGAGRRLWDWVPLACRSFSLGVPRL), are a transit peptide targeting the mitochondrion.

Belongs to the mitochondrion-specific ribosomal protein mL51 family. Component of the mitochondrial large ribosomal subunit (mt-LSU). Mature mammalian 55S mitochondrial ribosomes consist of a small (28S) and a large (39S) subunit. The 28S small subunit contains a 12S ribosomal RNA (12S mt-rRNA) and 30 different proteins. The 39S large subunit contains a 16S rRNA (16S mt-rRNA), a copy of mitochondrial valine transfer RNA (mt-tRNA(Val)), which plays an integral structural role, and 52 different proteins. Interacts with OXA1L.

The protein resides in the mitochondrion. This is Large ribosomal subunit protein mL51 (MRPL51) from Homo sapiens (Human).